Here is a 96-residue protein sequence, read N- to C-terminus: Large ribosomal subunit protein bL28 (96 aa).

A compositionally biased stretch (polar residues) spans 1–22; the sequence is MSRSCELTGKGVQSGNNVSHAN. Residues 1–24 are disordered; the sequence is MSRSCELTGKGVQSGNNVSHANNK.

It belongs to the bacterial ribosomal protein bL28 family.

In Sinorhizobium medicae (strain WSM419) (Ensifer medicae), this protein is Large ribosomal subunit protein bL28.